A 488-amino-acid chain; its full sequence is E3 ubiquitin-protein ligase TRIM34 (488 aa).

Residues 15-60 (CPICLELLTEPLSLDCGHSLCRACITVSNKEAVTSMGGKSSCPVCG) form an RING-type zinc finger. The B box-type zinc-finger motif lies at 92–134 (KKRDLCDHHGEKLLLFCKEDRKVICWLCERSQEHRGHHTVLTE). Zn(2+)-binding residues include Cys-97, His-100, Cys-119, and His-125. Residues 131–239 (VLTEEVFKEC…VRELISDVEC (109 aa)) adopt a coiled-coil conformation. The B30.2/SPRY domain maps to 283–488 (LSRMLQMFRE…APMTLCPPSS (206 aa)).

Belongs to the TRIM/RBCC family. Homotrimer. Interacts (via B-box and SPRY domain) with TRIM5. As to quaternary structure, (Microbial infection) Interacts (via the B30.2/SPRY domain) with HIV-1 capsid complexes. As to expression, is the most abundant form. It is highly expressed in the placenta, spleen, colon and peripheral blood leukocytes.

It localises to the cytoplasm. The protein resides in the mitochondrion. It catalyses the reaction S-ubiquitinyl-[E2 ubiquitin-conjugating enzyme]-L-cysteine + [acceptor protein]-L-lysine = [E2 ubiquitin-conjugating enzyme]-L-cysteine + N(6)-ubiquitinyl-[acceptor protein]-L-lysine.. It participates in protein modification; protein ubiquitination. In terms of biological role, functions as antiviral protein and contributes to the defense against retroviral infections. Acts as a capsid-specific restriction factor with the help of TRIM5 and prevents infection from non-host-adapted retroviruses. During influenza A virus infection, promotes programmed cell death by targeting ZBP1 for 'Lys-63'-linked polyubiquitination. In turn, promotes ZBP1 recruitment of RIPK3 to mediate virus-induced programmed necrosis. Negatively regulates the function of mitochondria by enhancing mitochondrial depolarization leading to cytochrome c release and mitochondria-dependent apoptosis. Also promotes the formation of multinucleated giant cells by means of cell fusion and phagocytosis in epithelial cells. This chain is E3 ubiquitin-protein ligase TRIM34 (TRIM34), found in Homo sapiens (Human).